Here is a 117-residue protein sequence, read N- to C-terminus: Large ribosomal subunit protein uL18 (117 aa).

The protein belongs to the universal ribosomal protein uL18 family. As to quaternary structure, part of the 50S ribosomal subunit; part of the 5S rRNA/L5/L18/L25 subcomplex. Contacts the 5S and 23S rRNAs.

Functionally, this is one of the proteins that bind and probably mediate the attachment of the 5S RNA into the large ribosomal subunit, where it forms part of the central protuberance. This is Large ribosomal subunit protein uL18 from Pseudoalteromonas atlantica (strain T6c / ATCC BAA-1087).